The sequence spans 212 residues: Cytidylate kinase (212 aa).

Residue 7-15 (GPAASGKGT) coordinates ATP.

The protein belongs to the cytidylate kinase family. Type 1 subfamily.

The protein resides in the cytoplasm. It catalyses the reaction CMP + ATP = CDP + ADP. It carries out the reaction dCMP + ATP = dCDP + ADP. The protein is Cytidylate kinase of Rhodopseudomonas palustris (strain BisB5).